We begin with the raw amino-acid sequence, 358 residues long: Probable dual-specificity RNA methyltransferase RlmN 1 (358 aa).

Positions 101-326 (MQAGGTLCIS…REKGFYTLLR (226 aa)) constitute a Radical SAM core domain. Residues Cys108 and Cys337 are joined by a disulfide bond. The [4Fe-4S] cluster site is built by Cys115, Cys119, and Cys122. S-adenosyl-L-methionine-binding positions include 162 to 163 (GE), Ser194, 218 to 220 (SLN), and Asn294. Cys337 serves as the catalytic S-methylcysteine intermediate.

This sequence belongs to the radical SAM superfamily. RlmN family. The cofactor is [4Fe-4S] cluster.

It localises to the cytoplasm. It carries out the reaction adenosine(2503) in 23S rRNA + 2 reduced [2Fe-2S]-[ferredoxin] + 2 S-adenosyl-L-methionine = 2-methyladenosine(2503) in 23S rRNA + 5'-deoxyadenosine + L-methionine + 2 oxidized [2Fe-2S]-[ferredoxin] + S-adenosyl-L-homocysteine. It catalyses the reaction adenosine(37) in tRNA + 2 reduced [2Fe-2S]-[ferredoxin] + 2 S-adenosyl-L-methionine = 2-methyladenosine(37) in tRNA + 5'-deoxyadenosine + L-methionine + 2 oxidized [2Fe-2S]-[ferredoxin] + S-adenosyl-L-homocysteine. Functionally, specifically methylates position 2 of adenine 2503 in 23S rRNA and position 2 of adenine 37 in tRNAs. This chain is Probable dual-specificity RNA methyltransferase RlmN 1, found in Protochlamydia amoebophila (strain UWE25).